Consider the following 476-residue polypeptide: Glycogen synthase (476 aa).

K15 is a binding site for ADP-alpha-D-glucose.

This sequence belongs to the glycosyltransferase 1 family. Bacterial/plant glycogen synthase subfamily.

It carries out the reaction [(1-&gt;4)-alpha-D-glucosyl](n) + ADP-alpha-D-glucose = [(1-&gt;4)-alpha-D-glucosyl](n+1) + ADP + H(+). It functions in the pathway glycan biosynthesis; glycogen biosynthesis. In terms of biological role, synthesizes alpha-1,4-glucan chains using ADP-glucose. The protein is Glycogen synthase of Lactobacillus acidophilus (strain ATCC 700396 / NCK56 / N2 / NCFM).